Reading from the N-terminus, the 552-residue chain is Arginine--tRNA ligase (552 aa).

Residues 123-133 carry the 'HIGH' region motif; it reads ANPTGPLTIGR.

It belongs to the class-I aminoacyl-tRNA synthetase family. As to quaternary structure, monomer.

Its subcellular location is the cytoplasm. The catalysed reaction is tRNA(Arg) + L-arginine + ATP = L-arginyl-tRNA(Arg) + AMP + diphosphate. The sequence is that of Arginine--tRNA ligase from Chlorobium phaeovibrioides (strain DSM 265 / 1930) (Prosthecochloris vibrioformis (strain DSM 265)).